The chain runs to 173 residues: Peptide deformylase (173 aa).

Fe cation contacts are provided by Cys98 and His140. Glu141 is an active-site residue. His144 contributes to the Fe cation binding site.

This sequence belongs to the polypeptide deformylase family. Fe(2+) is required as a cofactor.

The enzyme catalyses N-terminal N-formyl-L-methionyl-[peptide] + H2O = N-terminal L-methionyl-[peptide] + formate. Its function is as follows. Removes the formyl group from the N-terminal Met of newly synthesized proteins. Requires at least a dipeptide for an efficient rate of reaction. N-terminal L-methionine is a prerequisite for activity but the enzyme has broad specificity at other positions. The polypeptide is Peptide deformylase (Caulobacter sp. (strain K31)).